A 795-amino-acid chain; its full sequence is Glycerol-3-phosphate acyltransferase 2, mitochondrial (795 aa).

The segment at 1 to 21 (MATMLEGRCQTQPRSSPSGRE) is disordered. Residues 1–305 (MATMLEGRCQ…LGPRLSALGQ (305 aa)) lie on the Cytoplasmic side of the membrane. Over residues 9 to 18 (CQTQPRSSPS) the composition is skewed to polar residues. Residues 180-331 (QLHKGQMKMV…DALLVPVAVT (152 aa)) form an acyltransferase region. The HXXXXD motif signature appears at 205–210 (HKTLLD). The helical transmembrane segment at 306 to 332 (AWVGFVVQAVQVGIVPDALLVPVAVTY) threads the bilayer. Residues 333–449 (DLVPDAPCDI…QLLVRRLSCH (117 aa)) are Mitochondrial intermembrane-facing. Residues 450–472 (VLSASVGSSAVMSTAIMATLLLF) form a helical membrane-spanning segment. The Cytoplasmic portion of the chain corresponds to 473–795 (KHQKLLGEFS…EQFIRQFICS (323 aa)). A Phosphoserine modification is found at Ser-656. The residue at position 660 (Thr-660) is a Phosphothreonine. A phosphoserine mark is found at Ser-662 and Ser-664.

Belongs to the GPAT/DAPAT family. As to quaternary structure, interacts with PIWIL2.

The protein resides in the mitochondrion outer membrane. It catalyses the reaction sn-glycerol 3-phosphate + an acyl-CoA = a 1-acyl-sn-glycero-3-phosphate + CoA. It carries out the reaction a 1-acyl-sn-glycero-3-phosphate + an acyl-CoA = a 1,2-diacyl-sn-glycero-3-phosphate + CoA. The catalysed reaction is 1-(9Z-octadecenoyl)-sn-glycero-3-phosphate + (9Z)-octadecenoyl-CoA = 1,2-di-(9Z-octadecenoyl)-sn-glycero-3-phosphate + CoA. The enzyme catalyses 1-(9Z-octadecenoyl)-sn-glycero-3-phosphate + (5Z,8Z,11Z,14Z)-eicosatetraenoyl-CoA = 1-(9Z)-octadecenoyl-2-(5Z,8Z,11Z,14Z)-eicosatetraenoyl-sn-glycero-3-phosphate + CoA. It catalyses the reaction (5Z,8Z,11Z,14Z)-eicosatetraenoyl-CoA + sn-glycerol 3-phosphate = 1-(5Z,8Z,11Z,14Z-eicosatetraenoyl)-sn-glycero-3-phosphate + CoA. Its pathway is phospholipid metabolism; CDP-diacylglycerol biosynthesis; CDP-diacylglycerol from sn-glycerol 3-phosphate: step 1/3. With respect to regulation, inhibited by N-ethylmaleimide (NEM). In terms of biological role, transfers an acyl-group from acyl-ACP to the sn-1 position of glycerol-3-phosphate producing a lysophosphatidic acid (LPA), an essential step for the triacylglycerol (TAG) and glycerophospholipids. In vitro also transfers an acyl-group from acyl-ACP to the LPA producing a phosphatidic acid (PA). Prefers arachidonoyl-CoA as the acyl donor. Required for primary processing step during piRNA biosynthesis. Molecular mechanisms by which it promotes piRNA biosynthesis are unclear and do not involve its acyltransferase activity. The sequence is that of Glycerol-3-phosphate acyltransferase 2, mitochondrial from Homo sapiens (Human).